A 393-amino-acid chain; its full sequence is S-adenosylmethionine synthase (393 aa).

Residue His17 participates in ATP binding. Asp19 is a Mg(2+) binding site. Glu45 provides a ligand contact to K(+). Positions 58 and 104 each coordinate L-methionine. The segment at 104–114 is flexible loop; the sequence is QSAEIAQGVEE. ATP is bound by residues 171 to 173, Asp245, 251 to 252, Ala268, and Lys272; these read DAK and RK. Asp245 contributes to the L-methionine binding site. Lys276 provides a ligand contact to L-methionine.

The protein belongs to the AdoMet synthase family. As to quaternary structure, homotetramer; dimer of dimers. It depends on Mg(2+) as a cofactor. The cofactor is K(+).

The protein localises to the cytoplasm. It carries out the reaction L-methionine + ATP + H2O = S-adenosyl-L-methionine + phosphate + diphosphate. It participates in amino-acid biosynthesis; S-adenosyl-L-methionine biosynthesis; S-adenosyl-L-methionine from L-methionine: step 1/1. Catalyzes the formation of S-adenosylmethionine (AdoMet) from methionine and ATP. The overall synthetic reaction is composed of two sequential steps, AdoMet formation and the subsequent tripolyphosphate hydrolysis which occurs prior to release of AdoMet from the enzyme. The polypeptide is S-adenosylmethionine synthase (Hyphomonas neptunium (strain ATCC 15444)).